The primary structure comprises 1115 residues: DNA-directed RNA polymerase subunit beta (1115 aa).

The disordered stretch occupies residues 1084-1115 (HEAGEGEDDEYFEEDEEAVDDEPMTFDDDDME). Residues 1088–1115 (EGEDDEYFEEDEEAVDDEPMTFDDDDME) show a composition bias toward acidic residues.

Belongs to the RNA polymerase beta chain family. In terms of assembly, the RNAP catalytic core consists of 2 alpha, 1 beta, 1 beta' and 1 omega subunit. When a sigma factor is associated with the core the holoenzyme is formed, which can initiate transcription.

It carries out the reaction RNA(n) + a ribonucleoside 5'-triphosphate = RNA(n+1) + diphosphate. In terms of biological role, DNA-dependent RNA polymerase catalyzes the transcription of DNA into RNA using the four ribonucleoside triphosphates as substrates. The protein is DNA-directed RNA polymerase subunit beta of Desulfitobacterium hafniense (strain DSM 10664 / DCB-2).